The following is a 274-amino-acid chain: Protein RecA (274 aa).

43-50 (GPESSGKT) contacts ATP.

Belongs to the RecA family.

Its subcellular location is the cytoplasm. Can catalyze the hydrolysis of ATP in the presence of single-stranded DNA, the ATP-dependent uptake of single-stranded DNA by duplex DNA, and the ATP-dependent hybridization of homologous single-stranded DNAs. It interacts with LexA causing its activation and leading to its autocatalytic cleavage. The sequence is that of Protein RecA from Neisseria pharyngis.